A 228-amino-acid polypeptide reads, in one-letter code: Geranylgeranylglyceryl phosphate synthase (228 aa).

Lys-11 lines the sn-glycerol 1-phosphate pocket. Mg(2+)-binding residues include Asp-13 and Thr-39. Residues 159 to 164, Gly-189, and 209 to 210 contribute to the sn-glycerol 1-phosphate site; these read YIEYSG and GN.

Belongs to the GGGP/HepGP synthase family. Group I subfamily. Mg(2+) serves as cofactor.

Its subcellular location is the cytoplasm. It catalyses the reaction sn-glycerol 1-phosphate + (2E,6E,10E)-geranylgeranyl diphosphate = sn-3-O-(geranylgeranyl)glycerol 1-phosphate + diphosphate. It functions in the pathway membrane lipid metabolism; glycerophospholipid metabolism. Its function is as follows. Prenyltransferase that catalyzes the transfer of the geranylgeranyl moiety of geranylgeranyl diphosphate (GGPP) to the C3 hydroxyl of sn-glycerol-1-phosphate (G1P). This reaction is the first ether-bond-formation step in the biosynthesis of archaeal membrane lipids. In Methanoregula boonei (strain DSM 21154 / JCM 14090 / 6A8), this protein is Geranylgeranylglyceryl phosphate synthase.